Here is a 789-residue protein sequence, read N- to C-terminus: LPS-assembly protein LptD (789 aa).

The first 39 residues, 1–39 (MPPRQLSQTTPSCAVVPRKRRLVAALIAVPGLMPALAHA), serve as a signal peptide directing secretion.

The protein belongs to the LptD family. In terms of assembly, component of the lipopolysaccharide transport and assembly complex. Interacts with LptE and LptA.

It localises to the cell outer membrane. Its function is as follows. Together with LptE, is involved in the assembly of lipopolysaccharide (LPS) at the surface of the outer membrane. The polypeptide is LPS-assembly protein LptD (Paraburkholderia xenovorans (strain LB400)).